The sequence spans 477 residues: Cysteine--tRNA ligase (477 aa).

C29 is a binding site for Zn(2+). Positions 31–41 (PTVQASPHIGH) match the 'HIGH' region motif. Residues C219, H244, and E248 each contribute to the Zn(2+) site. Positions 275 to 279 (KMSKS) match the 'KMSKS' region motif. K278 lines the ATP pocket.

It belongs to the class-I aminoacyl-tRNA synthetase family. As to quaternary structure, monomer. Requires Zn(2+) as cofactor.

The protein localises to the cytoplasm. It catalyses the reaction tRNA(Cys) + L-cysteine + ATP = L-cysteinyl-tRNA(Cys) + AMP + diphosphate. This chain is Cysteine--tRNA ligase, found in Leifsonia xyli subsp. xyli (strain CTCB07).